The sequence spans 85 residues: Putative membrane protein insertion efficiency factor (85 aa).

This sequence belongs to the UPF0161 family.

The protein resides in the cell membrane. Its function is as follows. Could be involved in insertion of integral membrane proteins into the membrane. The polypeptide is Putative membrane protein insertion efficiency factor (Baumannia cicadellinicola subsp. Homalodisca coagulata).